We begin with the raw amino-acid sequence, 909 residues long: Disintegrin and metalloproteinase domain-containing protein 12 (909 aa).

Positions M1 to A28 are cleaved as a signal peptide. The propeptide occupies R29–R207. N-linked (GlcNAc...) asparagine glycans are attached at residues N111 and N149. The Cysteine switch signature appears at G177–N184. Positions 179 and 350 each coordinate Zn(2+). Residues E208–G708 lie on the Extracellular side of the membrane. The 203-residue stretch at K214–P416 folds into the Peptidase M12B domain. Intrachain disulfides connect C325–C411, C367–C395, and C369–C378. E351 is a catalytic residue. H354 and H360 together coordinate Zn(2+). Residues N381 and N452 are each glycosylated (N-linked (GlcNAc...) asparagine). The Disintegrin domain occupies G424 to D510. C482 and C502 are joined by a disulfide. An N-linked (GlcNAc...) asparagine glycan is attached at N651. An EGF-like domain is found at G656–D688. Intrachain disulfides connect C660–C670, C664–C676, and C678–C687. The chain crosses the membrane as a helical span at residues L709–L729. At K730 to K909 the chain is on the cytoplasmic side. A disordered region spans residues L822–P862. An SH3-binding; class II motif is present at residues A828–R834. Residues R834 to A841 carry the SH3-binding; class I motif. A compositionally biased stretch (pro residues) spans P851–A860. An SH3-binding; class I motif is present at residues R885–P891. Y907 is modified (phosphotyrosine; by SRC).

In terms of assembly, interacts with alpha-actinin-2 and with syndecans. Interacts with SH3PXD2A. Interacts with FST3. Interacts with RACK1; the interaction is required for PKC-dependent translocation of ADAM12 to the cell membrane. Requires Zn(2+) as cofactor. Post-translationally, the precursor is cleaved by a furin endopeptidase. In terms of tissue distribution, isoform 1 is expressed in placenta and skeletal, cardiac, and smooth muscle. Isoform 2 seems to be expressed only in placenta or in embryo and fetus. Both forms were expressed in some tumor cells lines. Not detected in brain, lung, liver, kidney or pancreas.

Its subcellular location is the cell membrane. The protein resides in the secreted. Involved in skeletal muscle regeneration, specifically at the onset of cell fusion. Also involved in macrophage-derived giant cells (MGC) and osteoclast formation from mononuclear precursors. The polypeptide is Disintegrin and metalloproteinase domain-containing protein 12 (ADAM12) (Homo sapiens (Human)).